Consider the following 354-residue polypeptide: E2F transcription factor-like E2FF (354 aa).

A DNA-binding region spans residues 21 to 86 (RKEKSLGVLV…RGKNQYSWKG (66 aa)). Residues 104 to 143 (ERLGYSSSNNSDKVSNGCEREEPLTLTPDDQENSSSSKMD) form a disordered region. Positions 108-117 (YSSSNNSDKV) are enriched in polar residues. Residues 145–225 (KKEKSLWLLA…TRKPAYRWLG (81 aa)) mediate DNA binding.

This sequence belongs to the E2F/DP family. High expression in young cotyledons and leaves, hypocotyls, shoot apical meristem, roots and mature pollen grains, moderate in developing trichomes, flowers and at early stages of developing anthers, and barely detectable in mature leaves. Not detected in primary root meristem, emerging lateral roots, pistils, developing embryos and siliques.

The protein localises to the nucleus. It localises to the cytoplasm. Its function is as follows. Inhibitor of E2F-dependent activation of gene expression. Binds specifically the E2 recognition site without interacting with DP proteins and prevents transcription activation by E2F/DP heterodimers. Does not bind retinoblastoma-related proteins. Acts as a growth regulator but is not associated with changes in the expression of cell cycle marker genes or in nuclear ploidy levels. Has no effect on cell proliferation, but may repress cell wall biosynthesis genes during cell elongation in differentiated cells. This is E2F transcription factor-like E2FF (E2FF) from Arabidopsis thaliana (Mouse-ear cress).